The chain runs to 206 residues: Pro-glucagon (206 aa).

A signal peptide spans methionine 1–glutamine 22. A disordered region spans residues aspartate 27 to glutamine 57. Basic and acidic residues predominate over residues aspartate 44–arginine 54. The propeptide occupies asparagine 86 to serine 109. Arginine 147 carries the post-translational modification Arginine amide. 2 propeptides span residues aspartate 151–glycine 163 and arginine 199–glutamine 206.

Belongs to the glucagon family. Post-translationally, proglucagon is post-translationally processed in a tissue-specific manner in pancreatic A cells and intestinal L cells. In pancreatic A cells, the major bioactive hormone is glucagon cleaved by PCSK2/PC2. In the intestinal L cells PCSK1/PC1 liberates GLP-1 and GLP-2. GLP-1 is further N-terminally truncated by post-translational processing in the intestinal L cells resulting in GLP-1(7-37) GLP-1-(7-36)amide.

The protein resides in the secreted. Its function is as follows. Plays a key role in glucose metabolism and homeostasis. Regulates blood glucose by increasing gluconeogenesis and decreasing glycolysis. Functionally, potent stimulator of glucose-dependent insulin release. Plays important roles on gastric motility and the suppression of plasma glucagon levels. May be involved in the suppression of satiety and stimulation of glucose disposal in peripheral tissues, independent of the actions of insulin. Has growth-promoting activities on intestinal epithelium. May also regulate the hypothalamic pituitary axis (HPA) via effects on LH, TSH, CRH, oxytocin, and vasopressin secretion. Increases islet mass through stimulation of islet neogenesis and pancreatic beta cell proliferation. In terms of biological role, stimulates intestinal growth and up-regulates villus height in the small intestine, concomitant with increased crypt cell proliferation and decreased enterocyte apoptosis. The gastrointestinal tract, from the stomach to the colon is the principal target for GLP-2 action. Plays a key role in nutrient homeostasis, enhancing nutrient assimilation through enhanced gastrointestinal function, as well as increasing nutrient disposal. Stimulates intestinal glucose transport and decreases mucosal permeability. This is Pro-glucagon (GCG) from Gallus gallus (Chicken).